A 981-amino-acid chain; its full sequence is Probable NAD kinase 2, chloroplastic (981 aa).

The interval 319 to 364 (APSAEQVQRFAEIVSDSAKKPIYLHSQEGISRTSAMVSRWKQYVTR) is calmodulin-binding. Disordered regions lie at residues 369–413 (ATQN…DRTM) and 551–601 (TNGK…AERN). Composition is skewed to polar residues over residues 387 to 406 (TEQL…NGTP), 551 to 563 (TNGK…ASTS), and 581 to 596 (SDTS…GSQK).

It belongs to the NAD kinase family.

The protein localises to the plastid. It localises to the chloroplast. It carries out the reaction NAD(+) + ATP = ADP + NADP(+) + H(+). Functionally, involved in chlorophyll synthesis and chloroplast protection against oxidative damage. In Oryza sativa subsp. japonica (Rice), this protein is Probable NAD kinase 2, chloroplastic.